The following is a 354-amino-acid chain: S-adenosylmethionine-dependent nucleotide dehydratase RSAD2 (354 aa).

A Radical SAM core domain is found at 62 to 282 (AMTPTSVNYH…LDRHSSISCL (221 aa)). 3 residues coordinate [4Fe-4S] cluster: C76, C80, and C83.

The protein belongs to the radical SAM superfamily. RSAD2 family. The cofactor is [4Fe-4S] cluster. Constitutively expressed in spleen, head kidney and trunk kidney. Following viral infection, detected in most organs including liver, gill, intestine, heart, muscle and brain.

The protein resides in the endoplasmic reticulum membrane. Its function is as follows. Interferon-inducible iron-sulfur (4FE-4S) cluster-binding antiviral protein which plays a major role in the cell antiviral state induced by type I and type II interferon. The protein is S-adenosylmethionine-dependent nucleotide dehydratase RSAD2 of Siniperca chuatsi (Mandarin fish).